Consider the following 146-residue polypeptide: Hemoglobin subunit beta (146 aa).

Val1 is subject to N-acetylvaline. One can recognise a Globin domain in the interval 2 to 146 (HLSGEEKAAV…VANALAHKYH (145 aa)). Thr12 bears the Phosphothreonine mark. Ser44 carries the phosphoserine modification. At Lys59 the chain carries N6-acetyllysine. Residue His63 participates in heme b binding. Lys82 is subject to N6-acetyllysine. His92 contributes to the heme b binding site. Cys93 bears the S-nitrosocysteine mark. The residue at position 144 (Lys144) is an N6-acetyllysine.

This sequence belongs to the globin family. In terms of assembly, heterotetramer of two alpha chains and two beta chains. As to expression, red blood cells.

Involved in oxygen transport from the lung to the various peripheral tissues. The sequence is that of Hemoglobin subunit beta (HBB) from Tupaia glis (Common tree shrew).